A 203-amino-acid chain; its full sequence is N-(5'-phosphoribosyl)anthranilate isomerase (203 aa).

The protein belongs to the TrpF family.

It catalyses the reaction N-(5-phospho-beta-D-ribosyl)anthranilate = 1-(2-carboxyphenylamino)-1-deoxy-D-ribulose 5-phosphate. Its pathway is amino-acid biosynthesis; L-tryptophan biosynthesis; L-tryptophan from chorismate: step 3/5. The chain is N-(5'-phosphoribosyl)anthranilate isomerase from Geotalea uraniireducens (strain Rf4) (Geobacter uraniireducens).